Here is a 480-residue protein sequence, read N- to C-terminus: Glycogen synthase (480 aa).

Lys-15 lines the ADP-alpha-D-glucose pocket.

Belongs to the glycosyltransferase 1 family. Bacterial/plant glycogen synthase subfamily.

The enzyme catalyses [(1-&gt;4)-alpha-D-glucosyl](n) + ADP-alpha-D-glucose = [(1-&gt;4)-alpha-D-glucosyl](n+1) + ADP + H(+). Its pathway is glycan biosynthesis; glycogen biosynthesis. Its function is as follows. Synthesizes alpha-1,4-glucan chains using ADP-glucose. This chain is Glycogen synthase, found in Rhizobium leguminosarum bv. trifolii (strain WSM2304).